The sequence spans 227 residues: uncharacterized protein (227 aa).

Positions 1-23 (MKKRFSLIMMTGLLFGLTSPAFA) are cleaved as a signal peptide. In terms of domain architecture, VWFA spans 36-227 (NVAVLLDASG…FTQQSLMLSK (192 aa)).

The protein to B.subtilis YwmD.

This is an uncharacterized protein from Bacillus subtilis (strain 168).